The sequence spans 241 residues: uncharacterized protein (241 aa).

Positions 84 to 216 constitute a GGDEF domain; the sequence is TVVSLVVCDL…APGPVVAGRD (133 aa). The tract at residues 215–241 is disordered; the sequence is RDGEVVRLADSPPKSAHDRRRLRGNRP. A compositionally biased stretch (basic residues) spans 231–241; the sequence is HDRRRLRGNRP.

This is an uncharacterized protein from Streptomyces griseus.